Consider the following 429-residue polypeptide: Dual-specificity RNA methyltransferase RlmN (429 aa).

Residues 1–23 are disordered; the sequence is MRAMQTHTEIAPMPIPGHVDPVP. The active-site Proton acceptor is the Glu128. The region spanning 134 to 397 is the Radical SAM core domain; sequence DADRGTLCVS…APVRTPRGRD (264 aa). An intrachain disulfide couples Cys141 to Cys402. [4Fe-4S] cluster is bound by residues Cys148, Cys152, and Cys155. S-adenosyl-L-methionine contacts are provided by residues 226–227, Ser258, 280–282, and Asn359; these read GE and SLH. Cys402 acts as the S-methylcysteine intermediate in catalysis.

This sequence belongs to the radical SAM superfamily. RlmN family. [4Fe-4S] cluster is required as a cofactor.

It localises to the cytoplasm. The catalysed reaction is adenosine(2503) in 23S rRNA + 2 reduced [2Fe-2S]-[ferredoxin] + 2 S-adenosyl-L-methionine = 2-methyladenosine(2503) in 23S rRNA + 5'-deoxyadenosine + L-methionine + 2 oxidized [2Fe-2S]-[ferredoxin] + S-adenosyl-L-homocysteine. It carries out the reaction adenosine(37) in tRNA + 2 reduced [2Fe-2S]-[ferredoxin] + 2 S-adenosyl-L-methionine = 2-methyladenosine(37) in tRNA + 5'-deoxyadenosine + L-methionine + 2 oxidized [2Fe-2S]-[ferredoxin] + S-adenosyl-L-homocysteine. Functionally, specifically methylates position 2 of adenine 2503 in 23S rRNA and position 2 of adenine 37 in tRNAs. m2A2503 modification seems to play a crucial role in the proofreading step occurring at the peptidyl transferase center and thus would serve to optimize ribosomal fidelity. The protein is Dual-specificity RNA methyltransferase RlmN of Novosphingobium aromaticivorans (strain ATCC 700278 / DSM 12444 / CCUG 56034 / CIP 105152 / NBRC 16084 / F199).